We begin with the raw amino-acid sequence, 282 residues long: Proteasome subunit beta (282 aa).

Residues 1–55 constitute a propeptide, removed in mature form; by autocatalysis; the sequence is MDNSSTGRYPAASLPPAYLRPGSSSFTDFLRAQAPELLPTARSFPEGSVVQAAHG. Residue T56 is the Nucleophile of the active site.

Belongs to the peptidase T1B family. The 20S proteasome core is composed of 14 alpha and 14 beta subunits that assemble into four stacked heptameric rings, resulting in a barrel-shaped structure. The two inner rings, each composed of seven catalytic beta subunits, are sandwiched by two outer rings, each composed of seven alpha subunits. The catalytic chamber with the active sites is on the inside of the barrel. Has a gated structure, the ends of the cylinder being occluded by the N-termini of the alpha-subunits. Is capped by the proteasome-associated ATPase, ARC.

It localises to the cytoplasm. It carries out the reaction Cleavage of peptide bonds with very broad specificity.. The protein operates within protein degradation; proteasomal Pup-dependent pathway. With respect to regulation, the formation of the proteasomal ATPase ARC-20S proteasome complex, likely via the docking of the C-termini of ARC into the intersubunit pockets in the alpha-rings, may trigger opening of the gate for substrate entry. Interconversion between the open-gate and close-gate conformations leads to a dynamic regulation of the 20S proteasome proteolysis activity. Functionally, component of the proteasome core, a large protease complex with broad specificity involved in protein degradation. The chain is Proteasome subunit beta from Actinosynnema mirum (strain ATCC 29888 / DSM 43827 / JCM 3225 / NBRC 14064 / NCIMB 13271 / NRRL B-12336 / IMRU 3971 / 101).